A 332-amino-acid chain; its full sequence is Anthranilate phosphoribosyltransferase (332 aa).

5-phospho-alpha-D-ribose 1-diphosphate-binding positions include Gly79, 82 to 83 (GD), Thr87, 89 to 92 (NIST), 107 to 115 (KHGNRSVSS), and Ser119. Gly79 lines the anthranilate pocket. Ser91 lines the Mg(2+) pocket. Asn110 contacts anthranilate. Arg165 provides a ligand contact to anthranilate. Residues Asp223 and Glu224 each coordinate Mg(2+).

This sequence belongs to the anthranilate phosphoribosyltransferase family. Homodimer. The cofactor is Mg(2+).

The catalysed reaction is N-(5-phospho-beta-D-ribosyl)anthranilate + diphosphate = 5-phospho-alpha-D-ribose 1-diphosphate + anthranilate. It functions in the pathway amino-acid biosynthesis; L-tryptophan biosynthesis; L-tryptophan from chorismate: step 2/5. Catalyzes the transfer of the phosphoribosyl group of 5-phosphorylribose-1-pyrophosphate (PRPP) to anthranilate to yield N-(5'-phosphoribosyl)-anthranilate (PRA). The chain is Anthranilate phosphoribosyltransferase from Vibrio vulnificus (strain CMCP6).